The chain runs to 770 residues: Proton-coupled zinc antiporter SLC30A5 (770 aa).

Residues 1-29 are Cytoplasmic-facing; sequence MEEKYSSQALAGGGVLGPVDVPSARLTRY. Residues 30 to 50 traverse the membrane as a helical segment; it reads IVLLCFAKFLKAVGLFESYDL. Residues 51–53 lie on the Lumenal side of the membrane; the sequence is LKA. Residues 54–74 form a helical membrane-spanning segment; that stretch reads VHLVQFIFIVKLGSAFFMVLF. Residues 75–95 are Cytoplasmic-facing; sequence QKPFSSGKVVTKHQWIKIFKH. The chain crosses the membrane as a helical span at residues 96–116; the sequence is AVVGCIISLLWFFGLTLCGPL. Arg-117 is a topological domain (lumenal). Residues 118–138 traverse the membrane as a helical segment; it reads TLLLFEHSDVVVLSLLSVLFT. Topologically, residues 139-149 are cytoplasmic; that stretch reads SSGGGPAKTRG. A helical membrane pass occupies residues 150–170; sequence AAFFIIAVICLLLFDNDDLMA. The Lumenal segment spans residues 171 to 190; the sequence is KIAEHPEGHHDSALTHVLYT. A helical membrane pass occupies residues 191-211; it reads VIAFLGVADHKGGVLLLVLAL. Residues 212-235 are Cytoplasmic-facing; sequence CCKVGFHMASRKLSVDVGGAKRLQ. The chain crosses the membrane as a helical span at residues 236–256; sequence ALSHLVSVLLLCPWVIVLSLT. Residues 257 to 264 lie on the Lumenal side of the membrane; sequence TESKVESW. A helical membrane pass occupies residues 265–285; sequence SSLIMPFITVIFFVVILDFYV. Residues 286–300 lie on the Cytoplasmic side of the membrane; sequence ESICSVKMESSKCAR. The chain crosses the membrane as a helical span at residues 301–321; sequence YGSFLIFISALLFGNFWTHPI. Over 322–339 the chain is Lumenal; it reads TDQLRAMNKPAHHESTEH. A helical transmembrane segment spans residues 340–360; the sequence is VLSGGVVVSAVFFILSANILS. Residues 361 to 415 lie on the Cytoplasmic side of the membrane; the sequence is SPSRKGQKGTLIGYSPEGTPLYNFMGDAIQQSSQSLPRFIKESLKQILEEYDSRQ. A helical transmembrane segment spans residues 416–436; the sequence is IFYFLCLNLAFTFVELFYGVW. Over 437–445 the chain is Lumenal; it reads TNSLGLISD. A helical membrane pass occupies residues 446–466; the sequence is GFHMLFDCSALVMGLFAALMT. Zn(2+) is bound by residues His-448 and Asp-452. Topologically, residues 467 to 480 are cytoplasmic; it reads RWKATRIFSYGYGR. The helical transmembrane segment at 481–501 threads the bilayer; that stretch reads VEILSGFINGLFLMVIAFFVF. Topologically, residues 502-517 are lumenal; that stretch reads MESVARLVDPPDIDTN. The chain crosses the membrane as a helical span at residues 518–538; it reads MLTPVSVGGLIVNLVGICAFS. The tract at residues 539-579 is his-rich loop; required for zinc transport; it reads HAHSHGASRGGCHSHEHSHSYHGHSHSHGHGHSHNDHGHSH. At 539–597 the chain is on the cytoplasmic side; it reads HAHSHGASRGGCHSHEHSHSYHGHSHSHGHGHSHNDHGHSHGHSHVSSGGGMNTNMRGV. The interval 548–586 is disordered; sequence GGCHSHEHSHSYHGHSHSHGHGHSHNDHGHSHGHSHVSS. The segment covering 558–570 has biased composition (basic residues); sequence SYHGHSHSHGHGH. The helical transmembrane segment at 598 to 618 threads the bilayer; that stretch reads FLHVLADTLGSVGVIVSTTFI. Residues His-600 and Asp-604 each coordinate Zn(2+). Topologically, residues 619-622 are lumenal; the sequence is QQFG. A helical transmembrane segment spans residues 623–643; it reads WLIADPLCSLFIATLIFLSVI. Over 644 to 770 the chain is Cytoplasmic; the sequence is PLLKDACQVL…KYYKDGTYIM (127 aa).

Belongs to the cation diffusion facilitator (CDF) transporter (TC 2.A.4) family. SLC30A subfamily. Heterodimer with SLC30A6/ZNT6; form a functional zinc ion transmembrane transporter.

The protein localises to the golgi apparatus. The protein resides in the golgi stack membrane. It localises to the cytoplasmic vesicle. It is found in the COPII-coated vesicle membrane. Its subcellular location is the secretory vesicle membrane. The protein localises to the trans-Golgi network membrane. The catalysed reaction is Zn(2+)(in) + 2 H(+)(out) = Zn(2+)(out) + 2 H(+)(in). In terms of biological role, together with SLC30A6 forms a functional proton-coupled zinc ion antiporter mediating zinc entry into the lumen of organelles along the secretory pathway. By contributing to zinc ion homeostasis within the early secretory pathway, regulates the activation and folding of enzymes like alkaline phosphatases and enzymes involved in phosphatidylinositol glycan anchor biosynthesis. The sequence is that of Proton-coupled zinc antiporter SLC30A5 from Gallus gallus (Chicken).